The sequence spans 542 residues: Nuclear speckle splicing regulatory protein 1 (542 aa).

Residues 21–53 form a disordered region; sequence RVLQKPSVFGSDSDDDETSVSESLQREAAKKQA. Phosphoserine occurs at positions 27, 31, and 33. Positions 103–172 form a coiled coil; it reads IHNLLKAVEI…RAAALEAHLD (70 aa). The tract at residues 105–169 is necessary for alternative splicing activity; that stretch reads NLLKAVEIRK…REKRAAALEA (65 aa). The disordered stretch occupies residues 190–516; it reads AVGEEAAPKS…FAKRSNEETV (327 aa). Residues Lys198 and Lys209 each participate in a glycyl lysine isopeptide (Lys-Gly) (interchain with G-Cter in SUMO2) cross-link. Positions 200-217 are enriched in basic and acidic residues; it reads SFREARTVIKEEKLRGYP. The segment covering 223 to 232 has biased composition (polar residues); it reads ESRPPQQSCV. A compositionally biased stretch (acidic residues) spans 239 to 256; it reads EAEENPDADREFDDESSE. Residues Ser254 and Ser255 each carry the phosphoserine modification. Residues 257 to 271 show a composition bias toward basic and acidic residues; it reads DGEKRDHKVKSRGED. Lys277 carries the N6-acetyllysine modification. Residues 277–288 show a composition bias toward basic residues; that stretch reads KHPKHHKNRAHS. Lys280 participates in a covalent cross-link: Glycyl lysine isopeptide (Lys-Gly) (interchain with G-Cter in SUMO2). Basic and acidic residues-rich tracts occupy residues 309-335, 343-475, and 485-501; these read RGHEHQDRQSRDQESCHKDRSHREEKS, SHKD…KPSH, and RLAEERPEKGSEQERPP. Residues 372–413 are a coiled coil; it reads KREKYSSREQERDRQRNDHDRYSEKEKKRKEKEEHTKARRER. Position 443 is a phosphoserine (Ser443).

It belongs to the NSRP1 family. In terms of assembly, interacts (via C-terminus) with SRSF1. Interacts (via C-terminus) with SRSF2.

The protein localises to the nucleus. Its subcellular location is the nucleus speckle. Its function is as follows. RNA-binding protein that mediates pre-mRNA alternative splicing regulation. This chain is Nuclear speckle splicing regulatory protein 1 (Nsrp1), found in Mus musculus (Mouse).